A 608-amino-acid chain; its full sequence is ATP-citrate synthase beta chain protein 2 (608 aa).

ATP contacts are provided by residues 214 to 234 and 265 to 291; these read ILRFNNIPQIKMMVVLGELGG and FKSEVQFGHAGAKSGGEMESAQAKNQA. Position 231 (glutamate 231) interacts with Mg(2+). Catalysis depends on histidine 273, which acts as the Tele-phosphohistidine intermediate. A CoA-binding site is contributed by 292-302; it reads LIDAGAIVPTS.

This sequence belongs to the succinate/malate CoA ligase alpha subunit family. As to quaternary structure, heterooctamer of 4 alpha and 4 beta chains. Expressed in trichomes, epidermal leaf cells, anther tapetal cells, stigma and in young vascular bundles of expanding leaves, cotyledons, roots, pedicel of flowers and siliques.

The protein localises to the cytoplasm. Its subcellular location is the cytosol. The catalysed reaction is oxaloacetate + acetyl-CoA + ADP + phosphate = citrate + ATP + CoA. ATP citrate-lyase is the primary enzyme responsible for the synthesis of cytosolic acetyl-CoA, used for the elongation of fatty acids and biosynthesis of isoprenoids, flavonoids and malonated derivatives. May supply substrate to the cytosolic acetyl-CoA carboxylase, which generates the malonyl-CoA used for the synthesis of a multitude of compounds, including very long chain fatty acids and flavonoids. Required for normal growth and development and elongation of C18 fatty acids to C20 to C24 fatty acids in seeds. n contrast to all known animal ACL enzymes having a homomeric structure, plant ACLs are composed of alpha and beta chains. This chain is ATP-citrate synthase beta chain protein 2, found in Arabidopsis thaliana (Mouse-ear cress).